A 2494-amino-acid chain; its full sequence is Nuclear receptor corepressor 1 (2494 aa).

The span at 1–33 (MSSSGYPPNQGAFSTEQGRYSSHPVQYTFPSSR) shows a compositional bias: polar residues. Disordered regions lie at residues 1–38 (MSSSGYPPNQGAFSTEQGRYSSHPVQYTFPSSRHQQEF), 53–106 (LLQQ…PRLD), 134–170 (SEVKKEQGLPSKHETTSSPLSGQPGEEQEASPSKLSK), and 198–222 (QQQLEEEAAKPPEPEKPVSPPPVEQ). The segment covering 71-82 (PVSDRPQDRRQG) has biased composition (basic and acidic residues). The segment covering 83 to 92 (YEQQYHSVTQ) has biased composition (polar residues). Basic and acidic residues-rich tracts occupy residues 93-106 (NEHEALESKRPRLD), 134-148 (SEVKKEQGLPSKHET), and 204-213 (EAAKPPEPEK). The segment at 154-304 (SGQPGEEQEA…REQNICQRYD (151 aa)) is interaction with tbl1xr1. A coiled-coil region spans residues 168–208 (LSKEELIQSMDRVDREIAKVEQQILKLKKKQQQLEEEAAKP). The 52-residue stretch at 427–478 (QFMNVWTDHEKEIFKEKFVQHPKNFGLIASYLERKTVSDCVLYYYLTKKNEN) folds into the SANT 1 domain. Disordered stretches follow at residues 488-638 (PKRR…VEHG), 671-913 (NLLQ…LDSK), 981-1007 (RQRQEQLSLESRMSASPGNMSKSPNMD), 1081-1124 (GARL…GTPG), 1413-1434 (IHEIPRQDLGSQESRKTPESSR), 1488-1585 (MGER…TQRE), 1745-1845 (LAFP…QESI), and 1912-1987 (EVVK…AHTK). Composition is skewed to basic and acidic residues over residues 502 to 525 (AQEEKEIEKVEEEKAERNDKKEEE) and 535 to 548 (KEELRDGTKDRTDA). Residues 502-549 (AQEEKEIEKVEEEKAERNDKKEEERREEEEKEEKEELRDGTKDRTDAI) adopt a coiled-coil conformation. Low complexity predominate over residues 582–616 (ASEAAAAANAASTATTAPATTTSTTATTTTAALVP). Over residues 617 to 629 (VAPPPEEPTPPPT) the composition is skewed to pro residues. Positions 622–668 (EEPTPPPTQEQSLVEHGRNWGAIAKMVGSKSESQCKNFYFNYKRRHN) constitute an SANT 2 domain. Over residues 692 to 702 (QCESVASTVSA) the composition is skewed to polar residues. A coiled-coil region spans residues 698–726 (STVSAQEDEENEASNEEENAEDSEGAENS). Acidic residues predominate over residues 703–722 (QEDEENEASNEEENAEDSEG). Positions 723-741 (AENSSDTESAPSPSPAEAA) are enriched in low complexity. Residues 766–779 (ASKSVSDSSPTPTV) are compositionally biased toward polar residues. Positions 829-864 (AEPDEVESKPSESAEVKIEEDTKDQDMERLMDRAEA) are enriched in basic and acidic residues. Composition is skewed to polar residues over residues 881–892 (ESQSDNDSSATC), 993–1004 (MSASPGNMSKSP), and 1104–1124 (ATSSDKPSFITGGSISQGTPG). A compositionally biased stretch (basic and acidic residues) spans 1488–1504 (MGERSKYEDTKSSEAIR). Polar residues predominate over residues 1508–1519 (TSVVSSGPSVLR). Positions 1548–1561 (PSPMSRSSPMARSA) are enriched in low complexity. Positions 1771–1810 (VSAERERERERDRERDREREKEQRERERDRERERERLAAA) form a coiled coil. A compositionally biased stretch (basic and acidic residues) spans 1773–1807 (AERERERERDRERDREREKEQRERERDRERERERL). Residues 1835 to 1845 (PSPSVRAQESI) are compositionally biased toward polar residues. A compositionally biased stretch (basic and acidic residues) spans 1914–1935 (VKPKEMKHDPARSEESLSRRNV). Positions 1953–1972 (QSPYTSSSFSGSKSQGQPSP) are enriched in low complexity. Basic and acidic residues predominate over residues 1978 to 1987 (AGKEKTAHTK). The short motif at 2008-2012 (IDVII) is the CORNR box 1 element. Residues 2018 to 2105 (SDKDGRDRNS…PSPQQTIPGH (88 aa)) are disordered. Residues 2027–2036 (SQSSDSSSSH) show a composition bias toward low complexity. The span at 2039 to 2048 (HRYDAPRDTI) shows a compositional bias: basic and acidic residues. The segment covering 2088-2102 (RYRQQQESPSPQQTI) has biased composition (polar residues). Positions 2119-2123 (ICQII) match the CORNR box 2 motif. Positions 2135–2177 (QALQQPPASTFQSTNPSSTPVRTKASSRFSPESQVQPVHNQRP) are enriched in polar residues. Residues 2135 to 2216 (QALQQPPAST…YEPISPPQAP (82 aa)) are disordered. Basic and acidic residues predominate over residues 2186–2205 (VLDRPRGRPGKSPDRGHISE). Positions 2322–2326 (LEDII) match the CORNR box 3 motif. Disordered stretches follow at residues 2346 to 2413 (GVAQ…SVHS) and 2446 to 2494 (MLNS…DSDE). Over residues 2376–2390 (HKQKLISKYGSRKTK) the composition is skewed to basic residues. 2 stretches are compositionally biased toward polar residues: residues 2446–2472 (MLNSTPPSSMSCAPTSMTQTSAHQQSR) and 2485–2494 (QYETLSDSDE).

It belongs to the N-CoR nuclear receptor corepressors family. As to quaternary structure, forms a large corepressor complex that contains sin3a/b, histone deacetylases hdac1 and hdac2, rbbp4 and possibly rbbp7. Interacts with the thyroid receptor (TR, composed of rxra and thrb) and the retinoid acid receptor (RAR, composed of rxra and rara) in the absence of ligand. Interacts with tbl1xr1. Interacts with zbtb33/kaiso.

It localises to the nucleus. Its function is as follows. Mediates transcriptional repression by certain nuclear receptors. Participates in complexes which promote histone deacetylation and the formation of repressive chromatin structures which may impede access by the basal transcription machinery. In association with hdac3, may play a role in the regulation of the circadian clock. The polypeptide is Nuclear receptor corepressor 1 (ncor1) (Xenopus tropicalis (Western clawed frog)).